Consider the following 563-residue polypeptide: Arginine--tRNA ligase (563 aa).

The 'HIGH' region signature appears at alanine 134 to asparagine 144.

Belongs to the class-I aminoacyl-tRNA synthetase family. Monomer.

The protein resides in the cytoplasm. The catalysed reaction is tRNA(Arg) + L-arginine + ATP = L-arginyl-tRNA(Arg) + AMP + diphosphate. The sequence is that of Arginine--tRNA ligase from Heliobacterium modesticaldum (strain ATCC 51547 / Ice1).